Here is a 217-residue protein sequence, read N- to C-terminus: Ribosomal RNA large subunit methyltransferase E (217 aa).

Residues glycine 71, tryptophan 73, aspartate 91, aspartate 107, and aspartate 132 each contribute to the S-adenosyl-L-methionine site. The active-site Proton acceptor is lysine 172.

The protein belongs to the class I-like SAM-binding methyltransferase superfamily. RNA methyltransferase RlmE family.

It is found in the cytoplasm. The catalysed reaction is uridine(2552) in 23S rRNA + S-adenosyl-L-methionine = 2'-O-methyluridine(2552) in 23S rRNA + S-adenosyl-L-homocysteine + H(+). Functionally, specifically methylates the uridine in position 2552 of 23S rRNA at the 2'-O position of the ribose in the fully assembled 50S ribosomal subunit. This chain is Ribosomal RNA large subunit methyltransferase E, found in Psychromonas ingrahamii (strain DSM 17664 / CCUG 51855 / 37).